A 261-amino-acid polypeptide reads, in one-letter code: Glucosamine-6-phosphate deaminase (261 aa).

The active-site Proton acceptor; for enolization step is the D67. D136 acts as the For ring-opening step in catalysis. Residue H138 is the Proton acceptor; for ring-opening step of the active site. E143 acts as the For ring-opening step in catalysis.

This sequence belongs to the glucosamine/galactosamine-6-phosphate isomerase family. NagB subfamily.

The catalysed reaction is alpha-D-glucosamine 6-phosphate + H2O = beta-D-fructose 6-phosphate + NH4(+). It participates in amino-sugar metabolism; N-acetylneuraminate degradation; D-fructose 6-phosphate from N-acetylneuraminate: step 5/5. Functionally, catalyzes the reversible isomerization-deamination of glucosamine 6-phosphate (GlcN6P) to form fructose 6-phosphate (Fru6P) and ammonium ion. The protein is Glucosamine-6-phosphate deaminase of Streptomyces avermitilis (strain ATCC 31267 / DSM 46492 / JCM 5070 / NBRC 14893 / NCIMB 12804 / NRRL 8165 / MA-4680).